We begin with the raw amino-acid sequence, 268 residues long: Putative hydro-lyase A1S_1268 (268 aa).

Belongs to the D-glutamate cyclase family.

In Acinetobacter baumannii (strain ATCC 17978 / DSM 105126 / CIP 53.77 / LMG 1025 / NCDC KC755 / 5377), this protein is Putative hydro-lyase A1S_1268.